A 354-amino-acid polypeptide reads, in one-letter code: Putative [LysW]-L-2-aminoadipate/[LysW]-L-glutamate phosphate reductase (354 aa).

NADP(+) is bound by residues 10–13 (SGVI) and 34–36 (SRR). Cysteine 153 is an active-site residue. Asparagine 321 serves as a coordination point for NADP(+).

This sequence belongs to the NAGSA dehydrogenase family. Type 1 subfamily. LysY sub-subfamily.

It localises to the cytoplasm. It carries out the reaction [amino-group carrier protein]-C-terminal-N-(1-carboxy-5-oxopentan-1-yl)-L-glutamine + phosphate + NADP(+) = [amino-group carrier protein]-C-terminal-N-(1-carboxy-5-phosphooxy-5-oxopentan-1-yl)-L-glutamine + NADPH + H(+). The catalysed reaction is [amino-group carrier protein]-C-terminal-gamma-(L-glutamyl-5-semialdehyde)-L-glutamate + phosphate + NADP(+) = [amino-group carrier protein]-C-terminal-gamma-(5-phospho-L-glutamyl)-L-glutamate + NADPH + H(+). It participates in amino-acid biosynthesis; L-lysine biosynthesis via AAA pathway; L-lysine from L-alpha-aminoadipate (Thermus route): step 3/5. Its pathway is amino-acid biosynthesis; L-arginine biosynthesis. In terms of biological role, involved in both the arginine and lysine biosynthetic pathways. The polypeptide is Putative [LysW]-L-2-aminoadipate/[LysW]-L-glutamate phosphate reductase (Caldivirga maquilingensis (strain ATCC 700844 / DSM 13496 / JCM 10307 / IC-167)).